The primary structure comprises 420 residues: Glucose-1-phosphate adenylyltransferase (420 aa).

Residues Tyr107, Gly172, 187–188 (EK), and Ser205 contribute to the alpha-D-glucose 1-phosphate site.

It belongs to the bacterial/plant glucose-1-phosphate adenylyltransferase family. As to quaternary structure, homotetramer.

It carries out the reaction alpha-D-glucose 1-phosphate + ATP + H(+) = ADP-alpha-D-glucose + diphosphate. Its pathway is glycan biosynthesis; glycogen biosynthesis. Its function is as follows. Involved in the biosynthesis of ADP-glucose, a building block required for the elongation reactions to produce glycogen. Catalyzes the reaction between ATP and alpha-D-glucose 1-phosphate (G1P) to produce pyrophosphate and ADP-Glc. The polypeptide is Glucose-1-phosphate adenylyltransferase (Rhizobium etli (strain CIAT 652)).